Reading from the N-terminus, the 216-residue chain is Pyrrolidone-carboxylate peptidase (216 aa).

Residues glutamate 80, cysteine 143, and histidine 168 contribute to the active site.

Belongs to the peptidase C15 family. As to quaternary structure, homotetramer.

The protein localises to the cytoplasm. It catalyses the reaction Release of an N-terminal pyroglutamyl group from a polypeptide, the second amino acid generally not being Pro.. Functionally, removes 5-oxoproline from various penultimate amino acid residues except L-proline. This is Pyrrolidone-carboxylate peptidase from Cupriavidus pinatubonensis (strain JMP 134 / LMG 1197) (Cupriavidus necator (strain JMP 134)).